A 220-amino-acid chain; its full sequence is Putative pyrophosphatase PpaX (220 aa).

D9 acts as the Nucleophile in catalysis.

This sequence belongs to the HAD-like hydrolase superfamily. PpaX family. Requires Mg(2+) as cofactor.

The enzyme catalyses diphosphate + H2O = 2 phosphate + H(+). This Caldanaerobacter subterraneus subsp. tengcongensis (strain DSM 15242 / JCM 11007 / NBRC 100824 / MB4) (Thermoanaerobacter tengcongensis) protein is Putative pyrophosphatase PpaX.